The sequence spans 452 residues: General transcription and DNA repair factor IIH subunit TFB2 (452 aa).

It belongs to the TFB2 family. In terms of assembly, component of the 7-subunit TFIIH core complex composed of XPB, XPD, TFB1/GTF2H1, GTF2H2/P44, TFB4/GTF2H3, TFB2/GTF2H4 and TFB5/GTF2H5, which is active in NER. The core complex associates with the 3-subunit CDK-activating kinase (CAK) module composed of CYCH1/cyclin H1, CDKD and MAT1/At4g30820 to form the 10-subunit holoenzyme (holo-TFIIH) active in transcription.

It is found in the nucleus. Functionally, component of the general transcription and DNA repair factor IIH (TFIIH) core complex, which is involved in general and transcription-coupled nucleotide excision repair (NER) of damaged DNA and, when complexed to CAK, in RNA transcription by RNA polymerase II. In NER, TFIIH acts by opening DNA around the lesion to allow the excision of the damaged oligonucleotide and its replacement by a new DNA fragment. In transcription, TFIIH has an essential role in transcription initiation. When the pre-initiation complex (PIC) has been established, TFIIH is required for promoter opening and promoter escape. Phosphorylation of the C-terminal tail (CTD) of the largest subunit of RNA polymerase II by the kinase module CAK controls the initiation of transcription. This chain is General transcription and DNA repair factor IIH subunit TFB2, found in Arabidopsis thaliana (Mouse-ear cress).